The chain runs to 292 residues: Protoheme IX farnesyltransferase (292 aa).

Transmembrane regions (helical) follow at residues 11–31, 37–57, 85–105, 108–128, 133–153, 163–183, 199–219, 223–243, and 261–281; these read FGIVVFSVLAGLAGYATGFQI, WKIFLETLLGIYFLSSGSLAL, AAAGILSVGLLLVGMNMLFKL, VAGWVGLFCVFLYNGPYTLWW, VFAAVPGAIPGALPVTIGYAV, SLYLFLIMFLWQMPHFWVLAI, VALGMEKTMFQVGLYTLVYVG, AAPMFVHASWMFVLLTFPFVF, and WLAFFMWLNVSMLVFIIIPVI.

This sequence belongs to the UbiA prenyltransferase family. Protoheme IX farnesyltransferase subfamily.

It is found in the cell inner membrane. It carries out the reaction heme b + (2E,6E)-farnesyl diphosphate + H2O = Fe(II)-heme o + diphosphate. It participates in porphyrin-containing compound metabolism; heme O biosynthesis; heme O from protoheme: step 1/1. Functionally, converts heme B (protoheme IX) to heme O by substitution of the vinyl group on carbon 2 of heme B porphyrin ring with a hydroxyethyl farnesyl side group. This chain is Protoheme IX farnesyltransferase, found in Bdellovibrio bacteriovorus (strain ATCC 15356 / DSM 50701 / NCIMB 9529 / HD100).